A 189-amino-acid polypeptide reads, in one-letter code: MVRDTRNVDLERGLELCKPEKVNKQNLFTNIIKPQKDKINIKTDKIKFFLNNLFTEFSKFHDSCYPDGRISTRSKLRWPLLIIWCILIVFAIDKNFEVKDFLSIWINESFINENRFYSEIWGPIAIYICLFVLLLLGLIYCSKIVVKAIPLISIVIAAVVVIIAVAMVKILYICHWLLQNFNFGFRHKS.

3 helical membrane passes run 78–98 (WPLL…NFEV), 120–140 (IWGP…GLIY), and 148–168 (AIPL…VAMV).

This sequence belongs to the UPF0494 family.

It localises to the membrane. This chain is UPF0494 membrane protein C977.06, found in Schizosaccharomyces pombe (strain 972 / ATCC 24843) (Fission yeast).